The primary structure comprises 155 residues: Transcription antitermination protein NusB (155 aa).

Belongs to the NusB family.

Its function is as follows. Involved in transcription antitermination. Required for transcription of ribosomal RNA (rRNA) genes. Binds specifically to the boxA antiterminator sequence of the ribosomal RNA (rrn) operons. This Mesorhizobium japonicum (strain LMG 29417 / CECT 9101 / MAFF 303099) (Mesorhizobium loti (strain MAFF 303099)) protein is Transcription antitermination protein NusB.